The chain runs to 118 residues: D-dopachrome decarboxylase (118 aa).

Pro-2 is subject to N-acetylproline. Lys-33 is subject to N6-acetyllysine.

It belongs to the MIF family. In terms of assembly, homotrimer.

The protein localises to the cytoplasm. The catalysed reaction is D-dopachrome + H(+) = 5,6-dihydroxyindole + CO2. Functionally, tautomerization of D-dopachrome with decarboxylation to give 5,6-dihydroxyindole (DHI). In Bos taurus (Bovine), this protein is D-dopachrome decarboxylase (DDT).